Consider the following 315-residue polypeptide: tRNA dimethylallyltransferase (315 aa).

13 to 20 lines the ATP pocket; the sequence is GPTAVGKT. Substrate is bound at residue 15-20; the sequence is TAVGKT. The interval 38–41 is interaction with substrate tRNA; it reads DSRL.

It belongs to the IPP transferase family. In terms of assembly, monomer. It depends on Mg(2+) as a cofactor.

It catalyses the reaction adenosine(37) in tRNA + dimethylallyl diphosphate = N(6)-dimethylallyladenosine(37) in tRNA + diphosphate. Its function is as follows. Catalyzes the transfer of a dimethylallyl group onto the adenine at position 37 in tRNAs that read codons beginning with uridine, leading to the formation of N6-(dimethylallyl)adenosine (i(6)A). This chain is tRNA dimethylallyltransferase, found in Herpetosiphon aurantiacus (strain ATCC 23779 / DSM 785 / 114-95).